Here is a 127-residue protein sequence, read N- to C-terminus: MSNRKPYVREMTRTWWKDHPFYRFYMVREATILPLIFFTICLLVGLGSLVKGPLAWASWLDFMANPIVVALNIVALAGSLFHAQTFFSMMPQVMPIRLGGKTLDKKVVVLAQWAAVAAITLLVLVIV.

Transmembrane regions (helical) follow at residues 30–50 (ATIL…GSLV), 67–87 (IVVA…QTFF), and 107–127 (VVVL…LVIV).

This sequence belongs to the FrdC family. In terms of assembly, part of an enzyme complex containing four subunits: a flavoprotein (FrdA), an iron-sulfur protein (FrdB), and two hydrophobic anchor proteins (FrdC and FrdD).

It is found in the cell inner membrane. Anchors the catalytic components of the fumarate reductase complex to the cell membrane, binds quinones. The protein is Fumarate reductase subunit C of Aliivibrio salmonicida (strain LFI1238) (Vibrio salmonicida (strain LFI1238)).